The following is a 188-amino-acid chain: Probable nicotinate-nucleotide adenylyltransferase (188 aa).

Belongs to the NadD family.

It catalyses the reaction nicotinate beta-D-ribonucleotide + ATP + H(+) = deamido-NAD(+) + diphosphate. It participates in cofactor biosynthesis; NAD(+) biosynthesis; deamido-NAD(+) from nicotinate D-ribonucleotide: step 1/1. Catalyzes the reversible adenylation of nicotinate mononucleotide (NaMN) to nicotinic acid adenine dinucleotide (NaAD). This Listeria monocytogenes serotype 4a (strain HCC23) protein is Probable nicotinate-nucleotide adenylyltransferase.